Consider the following 48-residue polypeptide: ATP synthase protein 8 (48 aa).

Residues 12 to 32 (QLTYGLLLITVLLILFSQFFL) traverse the membrane as a helical segment.

The protein belongs to the ATPase protein 8 family. As to quaternary structure, F-type ATPases have 2 components, CF(1) - the catalytic core - and CF(0) - the membrane proton channel.

Its subcellular location is the mitochondrion membrane. In terms of biological role, mitochondrial membrane ATP synthase (F(1)F(0) ATP synthase or Complex V) produces ATP from ADP in the presence of a proton gradient across the membrane which is generated by electron transport complexes of the respiratory chain. F-type ATPases consist of two structural domains, F(1) - containing the extramembraneous catalytic core and F(0) - containing the membrane proton channel, linked together by a central stalk and a peripheral stalk. During catalysis, ATP synthesis in the catalytic domain of F(1) is coupled via a rotary mechanism of the central stalk subunits to proton translocation. Part of the complex F(0) domain. Minor subunit located with subunit a in the membrane. The chain is ATP synthase protein 8 (ATP8) from Candida glabrata (strain ATCC 2001 / BCRC 20586 / JCM 3761 / NBRC 0622 / NRRL Y-65 / CBS 138) (Yeast).